A 358-amino-acid chain; its full sequence is Homer protein homolog 3 (358 aa).

The tract at residues 1–80 (MSTAREQPIF…TKTSQKFGQW (80 aa)) is required for interaction with NFATC2. One can recognise a WH1 domain in the interval 1–113 (MSTAREQPIF…EKFQEVKEAA (113 aa)). Positions 95 to 122 (SEQQLTQFAEKFQEVKEAARLAREKSQD) form a coiled coil. S120 and S158 each carry phosphoserine. 2 disordered regions span residues 137 to 168 (QVPPSPLVSTNGPEEKLFRSQSADAPGPTERE) and 239 to 296 (AEPV…QVQD). Residues 190–355 (ALQDSNQRLA…LREGLARLAE (166 aa)) adopt a coiled-coil conformation. Over residues 257–267 (LEARVQTKDQE) the composition is skewed to basic and acidic residues. Positions 268–277 (IQTLKNQSTG) are enriched in polar residues. The span at 280 to 290 (EAPDTAEREET) shows a compositional bias: basic and acidic residues.

This sequence belongs to the Homer family. Tetramer. Encodes coiled-coil structures that mediate homo- and heteromultimerization. Interacts with NFATC2; interaction is calcium independent; interaction competes with PPP3CA for NFATC2 binding; interaction is reduced by AKT activation. Interacts with NFATC1 and NFATC4. Interacts with SHANK1; forms a high-order complex at least composed of SHANK1 and HOMER3; the complex formation is regulated by CAMK2A-mediated phosphorylation.

The protein localises to the cytoplasm. Its subcellular location is the postsynaptic density. It is found in the synapse. Its function is as follows. Postsynaptic density scaffolding protein. Binds and cross-links cytoplasmic regions of GRM1, GRM5, ITPR1, DNM3, RYR1, RYR2, SHANK1 and SHANK3. By physically linking GRM1 and GRM5 with ER-associated ITPR1 receptors, it aids the coupling of surface receptors to intracellular calcium release. Negatively regulates T cell activation by inhibiting the calcineurin-NFAT pathway. Acts by competing with calcineurin/PPP3CA for NFAT protein binding, hence preventing NFAT activation by PPP3CA. In Rattus norvegicus (Rat), this protein is Homer protein homolog 3.